The chain runs to 96 residues: Large ribosomal subunit protein uL23 (96 aa).

The protein belongs to the universal ribosomal protein uL23 family. In terms of assembly, part of the 50S ribosomal subunit. Contacts protein L29, and trigger factor when it is bound to the ribosome.

In terms of biological role, one of the early assembly proteins it binds 23S rRNA. One of the proteins that surrounds the polypeptide exit tunnel on the outside of the ribosome. Forms the main docking site for trigger factor binding to the ribosome. In Nitratidesulfovibrio vulgaris (strain DSM 19637 / Miyazaki F) (Desulfovibrio vulgaris), this protein is Large ribosomal subunit protein uL23.